The primary structure comprises 399 residues: Dual-specificity RNA methyltransferase RlmN (399 aa).

Catalysis depends on Glu-121, which acts as the Proton acceptor. One can recognise a Radical SAM core domain in the interval 127–376 (DVDRGTLCVS…VRTPRGRDIL (250 aa)). An intrachain disulfide couples Cys-134 to Cys-379. The [4Fe-4S] cluster site is built by Cys-141, Cys-145, and Cys-148. S-adenosyl-L-methionine is bound by residues 205–206 (GE), Ser-237, 259–261 (SLH), and Asn-336. The active-site S-methylcysteine intermediate is Cys-379.

The protein belongs to the radical SAM superfamily. RlmN family. It depends on [4Fe-4S] cluster as a cofactor.

The protein resides in the cytoplasm. The enzyme catalyses adenosine(2503) in 23S rRNA + 2 reduced [2Fe-2S]-[ferredoxin] + 2 S-adenosyl-L-methionine = 2-methyladenosine(2503) in 23S rRNA + 5'-deoxyadenosine + L-methionine + 2 oxidized [2Fe-2S]-[ferredoxin] + S-adenosyl-L-homocysteine. The catalysed reaction is adenosine(37) in tRNA + 2 reduced [2Fe-2S]-[ferredoxin] + 2 S-adenosyl-L-methionine = 2-methyladenosine(37) in tRNA + 5'-deoxyadenosine + L-methionine + 2 oxidized [2Fe-2S]-[ferredoxin] + S-adenosyl-L-homocysteine. In terms of biological role, specifically methylates position 2 of adenine 2503 in 23S rRNA and position 2 of adenine 37 in tRNAs. m2A2503 modification seems to play a crucial role in the proofreading step occurring at the peptidyl transferase center and thus would serve to optimize ribosomal fidelity. This chain is Dual-specificity RNA methyltransferase RlmN, found in Methylocella silvestris (strain DSM 15510 / CIP 108128 / LMG 27833 / NCIMB 13906 / BL2).